Consider the following 365-residue polypeptide: Alpha-keto acid-binding periplasmic protein TakP (365 aa).

Positions 1-26 (MDRRSFITKAAVGGAAASALAAPALA) form a signal peptide, tat-type signal. Residues 99–100 (YY), Q156, and R177 contribute to the substrate site. Q156 contributes to the Na(+) binding site. Na(+) contacts are provided by E214, W215, and E240.

Belongs to the bacterial solute-binding protein 7 family. Homodimer. The complex comprises the extracytoplasmic solute receptor protein TakP, and the two transmembrane proteins TakQ and TakM. Post-translationally, predicted to be exported by the Tat system. The position of the signal peptide cleavage has not been experimentally proven.

Its subcellular location is the periplasm. Part of the tripartite ATP-independent periplasmic (TRAP) transport system TakPQM involved in the uptake of alpha-keto acids. This protein specifically binds alpha-keto acids including pyruvate, oxobutyrate, oxovalerate and 4-methyl-2-oxovalerate. Ligand-binding affinity increases with the increasing chain length of the aliphatic backbone of the ligand. Is not able to bind alpha-ketoglutarate. This is Alpha-keto acid-binding periplasmic protein TakP from Cereibacter sphaeroides (strain ATCC 17023 / DSM 158 / JCM 6121 / CCUG 31486 / LMG 2827 / NBRC 12203 / NCIMB 8253 / ATH 2.4.1.) (Rhodobacter sphaeroides).